The primary structure comprises 311 residues: HPr kinase/phosphorylase (311 aa).

Catalysis depends on residues His138 and Lys159. 153 to 160 (GDSGIGKS) is an ATP binding site. Mg(2+) is bound at residue Ser160. Asp177 functions as the Proton acceptor; for phosphorylation activity. Proton donor; for dephosphorylation activity in the catalytic mechanism. The tract at residues 201 to 210 (LEIRGVGIID) is important for the catalytic mechanism of both phosphorylation and dephosphorylation. Glu202 contributes to the Mg(2+) binding site. Residue Arg243 is part of the active site. Residues 264–269 (PVKTGR) are important for the catalytic mechanism of dephosphorylation.

Belongs to the HPrK/P family. Homohexamer. The cofactor is Mg(2+).

It catalyses the reaction [HPr protein]-L-serine + ATP = [HPr protein]-O-phospho-L-serine + ADP + H(+). The enzyme catalyses [HPr protein]-O-phospho-L-serine + phosphate + H(+) = [HPr protein]-L-serine + diphosphate. Catalyzes the ATP- as well as the pyrophosphate-dependent phosphorylation of a specific serine residue in HPr, a phosphocarrier protein of the phosphoenolpyruvate-dependent sugar phosphotransferase system (PTS). HprK/P also catalyzes the pyrophosphate-producing, inorganic phosphate-dependent dephosphorylation (phosphorolysis) of seryl-phosphorylated HPr (P-Ser-HPr). The two antagonistic activities of HprK/P are regulated by several intracellular metabolites, which change their concentration in response to the absence or presence of rapidly metabolisable carbon sources (glucose, fructose, etc.) in the growth medium. Therefore, by controlling the phosphorylation state of HPr, HPrK/P is a sensor enzyme that plays a major role in the regulation of carbon metabolism and sugar transport: it mediates carbon catabolite repression (CCR), and regulates PTS-catalyzed carbohydrate uptake and inducer exclusion. The polypeptide is HPr kinase/phosphorylase (Streptococcus gordonii (strain Challis / ATCC 35105 / BCRC 15272 / CH1 / DL1 / V288)).